We begin with the raw amino-acid sequence, 470 residues long: Cysteine--tRNA ligase (470 aa).

Cys28 provides a ligand contact to Zn(2+). The 'HIGH' region motif lies at 30–40; it reads PTVYNYIHIGN. The Zn(2+) site is built by Cys212, His237, and Glu241. Residues 271–275 carry the 'KMSKS' region motif; the sequence is KMSKS. Lys274 contacts ATP.

Belongs to the class-I aminoacyl-tRNA synthetase family. Monomer. Requires Zn(2+) as cofactor.

It is found in the cytoplasm. It catalyses the reaction tRNA(Cys) + L-cysteine + ATP = L-cysteinyl-tRNA(Cys) + AMP + diphosphate. In Limosilactobacillus reuteri (strain DSM 20016) (Lactobacillus reuteri), this protein is Cysteine--tRNA ligase.